Reading from the N-terminus, the 860-residue chain is MGEVTAEEVEKFLDSNIGFAKQYYNLHYRAKLISDLLGAKEAAVDFSNYHSPSSMEESEIIFDLLRDFQENLQTEKCIFNVMKKLCFLLQADRMSLFMYRTRNGIAELATRLFNVHKDAVLEDCLVMPDQEIVFPLDMGIVGHVAHSKKIANVPNTEEDEHFCDFVDILTEYKTKNILASPIMNGKDVVAIIMAVNKVDGSHFTKRDEEILLKYLNFANLIMKVYHLSYLHNCETRRGQILLWSGSKVFEELTDIERQFHKALYTVRAFLNCDRYSVGLLDMTKQKEFFDVWPVLMGEVPPYSGPRTPDGREINFYKVIDYILHGKEDIKVIPNPPPDHWALVSGLPAYVAQNGLICNIMNAPAEDFFAFQKEPLDESGWMIKNVLSMPIVNKKEEIVGVATFYNRKDGKPFDEMDETLMESLTQFLGWSVLNPDTYESMNKLENRKDIFQDIVKYHVKCDNEEIQKILKTREVYGKEPWECEEEELAEILQAELPDADKYEINKFHFSDLPLTELELVKCGIQMYYELKVVDKFHIPQEALVRFMYSLSKGYRKITYHNWRHGFNVGQTMFSLLVTGKLKRYFTDLEALAMVTAAFCHDIDHRGTNNLYQMKSQNPLAKLHGSSILERHHLEFGKTLLRDESLNIFQNLNRRQHEHAIHMMDIAIIATDLALYFKKRTMFQKIVDQSKTYESEQEWTQYMMLEQTRKEIVMAMMMTACDLSAITKPWEVQSQVALLVAAEFWEQGDLERTVLQQNPIPMMDRNKADELPKLQVGFIDFVCTFVYKEFSRFHEEITPMLDGITNNRKEWKALADEYDAKMKVQEEKKQKQQSAKSAAAGNQPGGNPSPGGATTSKSCCIQ.

Position 2 is an N-acetylglycine (Gly2). GAF domains are found at residues 73–222 and 254–431; these read QTEK…NLIM and DIER…GWSV. The region spanning 483–816 is the PDEase domain; that stretch reads EEEELAEILQ…KEWKALADEY (334 aa). His559 acts as the Proton donor in catalysis. Residues His563, His599, Asp600, and Asp720 each contribute to the a divalent metal cation site. Residues 821 to 860 form a disordered region; that stretch reads KVQEEKKQKQQSAKSAAAGNQPGGNPSPGGATTSKSCCIQ. Positions 830–851 are enriched in low complexity; it reads QQSAKSAAAGNQPGGNPSPGGA. The residue at position 857 (Cys857) is a Cysteine methyl ester. A lipid anchor (S-farnesyl cysteine) is attached at Cys857. The propeptide at 858 to 860 is removed in mature form; the sequence is CIQ.

This sequence belongs to the cyclic nucleotide phosphodiesterase family. As to quaternary structure, oligomer composed of two catalytic chains (alpha and beta), an inhibitory chain (gamma) and the delta chain. The cofactor is a divalent metal cation.

Its subcellular location is the cell membrane. It is found in the cell projection. The protein localises to the cilium. The protein resides in the photoreceptor outer segment. It carries out the reaction 3',5'-cyclic GMP + H2O = GMP + H(+). Functionally, rod-specific cGMP phosphodiesterase that catalyzes the hydrolysis of 3',5'-cyclic GMP. This protein participates in processes of transmission and amplification of the visual signal. This chain is Rod cGMP-specific 3',5'-cyclic phosphodiesterase subunit alpha, found in Homo sapiens (Human).